A 778-amino-acid polypeptide reads, in one-letter code: Semaphorin-3ab (778 aa).

The signal sequence occupies residues 1 to 17 (MDYLWWIVLLIWTLIAP). The Sema domain maps to 32-515 (RLKPSYKEML…SAIGVSQMPL (484 aa)). N54 carries an N-linked (GlcNAc...) asparagine glycan. Cysteines 105 and 116 form a disulfide. N-linked (GlcNAc...) asparagine glycosylation occurs at N127. Intrachain disulfides connect C134–C143, C270–C382, C294–C342, and C518–C536. Residues 579–668 (GEAGLLDKTV…FIQTLLRLTL (90 aa)) form the Ig-like C2-type domain. N-linked (GlcNAc...) asparagine glycosylation occurs at N593. C652 and C716 form a disulfide bridge. The tract at residues 727–778 (RRQKANLLHASQSHTSQILHSSQSHAKWKLLQENKKGRNRRTHEMQRAPRSV) is disordered. Polar residues predominate over residues 735 to 751 (HASQSHTSQILHSSQSH). The span at 756–778 (LLQENKKGRNRRTHEMQRAPRSV) shows a compositional bias: basic and acidic residues.

Belongs to the semaphorin family. Expressed in rhombomeres three and five, and in the posterior half of newly formed somites which is avoided by ventrally extending motor axons.

The protein localises to the secreted. Functionally, might normally influence the midsegmental pathway choice of the ventrally extending motor axons by contributing to a repulsive domain in the posterior somite. This chain is Semaphorin-3ab (sema3ab), found in Danio rerio (Zebrafish).